The chain runs to 193 residues: Ion-translocating oxidoreductase complex subunit A (193 aa).

6 consecutive transmembrane segments (helical) span residues 4–24, 39–59, 71–91, 102–122, 134–154, and 167–187; these read FFFI…KFLG, IGMG…SWMV, FLRI…IEVV, ALGI…VALL, LLYG…FAGM, and FAGA…FMGF.

It belongs to the NqrDE/RnfAE family. As to quaternary structure, the complex is composed of six subunits: RnfA, RnfB, RnfC, RnfD, RnfE and RnfG.

The protein localises to the cellular chromatophore membrane. Part of a membrane-bound complex that couples electron transfer with translocation of ions across the membrane. The protein is Ion-translocating oxidoreductase complex subunit A of Cereibacter sphaeroides (strain ATCC 17029 / ATH 2.4.9) (Rhodobacter sphaeroides).